A 737-amino-acid chain; its full sequence is Protein-glucosylgalactosylhydroxylysine glucosidase (737 aa).

300–301 is a binding site for substrate; sequence WD. The active-site Proton donor is the E430. 498–499 contributes to the substrate binding site; that stretch reads KQ. Positions 681-737 are disordered; sequence RSAGRIQMSPPKLPGSSSSEFPGRTFSDVRDPLQSPLWVTLGSSSPTESLTVDPASE. Over residues 721-730 the composition is skewed to polar residues; sequence LGSSSPTESL.

This sequence belongs to the glycosyl hydrolase 65 family.

The enzyme catalyses (5R)-5-O-[alpha-D-glucosyl-(1-&gt;2)-beta-D-galactosyl]-5-hydroxy-L-lysyl-[collagen] + H2O = (5R)-5-O-(beta-D-galactosyl)-5-hydroxy-L-lysyl-[collagen] + D-glucose. In terms of biological role, catalyzes the hydrolysis of glucose from the disaccharide unit linked to hydroxylysine residues of collagen and collagen-like proteins. This is Protein-glucosylgalactosylhydroxylysine glucosidase from Homo sapiens (Human).